An 876-amino-acid chain; its full sequence is Alanine--tRNA ligase (876 aa).

Zn(2+) contacts are provided by H568, H572, C670, and H674.

Belongs to the class-II aminoacyl-tRNA synthetase family. Requires Zn(2+) as cofactor.

It localises to the cytoplasm. The enzyme catalyses tRNA(Ala) + L-alanine + ATP = L-alanyl-tRNA(Ala) + AMP + diphosphate. In terms of biological role, catalyzes the attachment of alanine to tRNA(Ala) in a two-step reaction: alanine is first activated by ATP to form Ala-AMP and then transferred to the acceptor end of tRNA(Ala). Also edits incorrectly charged Ser-tRNA(Ala) and Gly-tRNA(Ala) via its editing domain. This chain is Alanine--tRNA ligase, found in Anaplasma phagocytophilum (strain HZ).